A 416-amino-acid chain; its full sequence is Gamma-glutamyl phosphate reductase (416 aa).

This sequence belongs to the gamma-glutamyl phosphate reductase family.

The protein resides in the cytoplasm. The catalysed reaction is L-glutamate 5-semialdehyde + phosphate + NADP(+) = L-glutamyl 5-phosphate + NADPH + H(+). It functions in the pathway amino-acid biosynthesis; L-proline biosynthesis; L-glutamate 5-semialdehyde from L-glutamate: step 2/2. Catalyzes the NADPH-dependent reduction of L-glutamate 5-phosphate into L-glutamate 5-semialdehyde and phosphate. The product spontaneously undergoes cyclization to form 1-pyrroline-5-carboxylate. In Halalkalibacterium halodurans (strain ATCC BAA-125 / DSM 18197 / FERM 7344 / JCM 9153 / C-125) (Bacillus halodurans), this protein is Gamma-glutamyl phosphate reductase.